We begin with the raw amino-acid sequence, 1898 residues long: Protein NYNRIN (1898 aa).

Disordered stretches follow at residues 289 to 315 (SNNQDGMDSAQEEGTVQATSSQDSTNH), 424 to 450 (LPSAESPAGRPDGGLGGEAALQNCPRP), 467 to 533 (DVKD…TDQS), 618 to 691 (EPTT…TDAG), and 711 to 731 (VSLLKGQGQAGRQGPQSSGTL). Positions 618–627 (EPTTPKTPQA) are enriched in polar residues. Residues 649–672 (PAATVSKAPAASKAPAAPKVPVTP) show a composition bias toward low complexity. One can recognise an RNase NYN domain in the interval 792-942 (LRRVVIDGSS…LGRDGPTLDE (151 aa)). A disordered region spans residues 968 to 1019 (SASVTELSDDADSGPLESLPNMEEVREEKEERQDEEQRQGQGTQKAAEEDDL). The span at 990-1005 (EEVREEKEERQDEEQR) shows a compositional bias: basic and acidic residues. The region spanning 1304–1450 (LSTFVCIHMS…VDTLAKQGAQ (147 aa)) is the RNase H type-1 domain. 2 consecutive transmembrane segments (helical) span residues 1372-1392 (VVFLTHCNWIFSLLWELLPLW) and 1408-1428 (PSLLSYIISLTSGLSSLPFIY). Positions 1609–1774 (RSTAPWSNLQ…ESRLTEPLWW (166 aa)) constitute an Integrase catalytic domain.

The protein localises to the membrane. The chain is Protein NYNRIN (NYNRIN) from Homo sapiens (Human).